The primary structure comprises 262 residues: Nodulation protein J (262 aa).

One can recognise an ABC transmembrane type-2 domain in the interval 33–259 (ASILGNLAEP…FLSVGLLQRR (227 aa)). 6 helical membrane passes run 35–55 (ILGNLAEPVTSLFGLGFGLGA), 62–82 (GIPYVAFLAAGMVATSAMISA), 125–145 (ALLAGTAMMLVAATMGFASWP), 147–167 (VLFALPVIALTGFAFASLAMI), 177–197 (YFIFYQTLFLTPMLFLSGAVF), and 236–256 (LHISALCIFAVMPFFLSVGLL).

The protein belongs to the ABC-2 integral membrane protein family. Lipooligosaccharide exporter (TC 3.A.1.102) subfamily. As to quaternary structure, the complex is composed of two ATP-binding proteins (NodI) and two transmembrane proteins (NodJ).

Its subcellular location is the cell inner membrane. Functionally, part of the ABC transporter complex NodIJ involved in the export of the nodulation factors (Nod factors), the bacterial signal molecules that induce symbiosis and subsequent nodulation induction. Nod factors are LCO (lipo-chitin oligosaccharide), a modified beta-1,4-linked N-acetylglucosamine oligosaccharide. This subunit encodes the transporter. The polypeptide is Nodulation protein J (nodJ) (Sinorhizobium fredii (strain NBRC 101917 / NGR234)).